Consider the following 398-residue polypeptide: Fe-regulated protein 8 (398 aa).

Protein of unknown function; part of the gene cluster that mediates the biosynthesis of siderophore ferrichrome A which is contributing to organismal virulence. This Mycosarcoma maydis (Corn smut fungus) protein is Fe-regulated protein 8.